Consider the following 331-residue polypeptide: ADP-L-glycero-D-manno-heptose-6-epimerase (331 aa).

NADP(+)-binding positions include 11-12 (FI), 32-33 (DN), Lys39, Lys54, 75-79 (EGACS), and Asn92. The Proton acceptor role is filled by Tyr139. Lys143 contacts NADP(+). Asn168 contributes to the substrate binding site. Positions 169 and 177 each coordinate NADP(+). Residue Lys177 is the Proton acceptor of the active site. Residues Arg179, His186, 200 to 203 (FGEY), Arg213, and Tyr292 contribute to the substrate site.

Belongs to the NAD(P)-dependent epimerase/dehydratase family. HldD subfamily. Homopentamer. It depends on NADP(+) as a cofactor.

It catalyses the reaction ADP-D-glycero-beta-D-manno-heptose = ADP-L-glycero-beta-D-manno-heptose. Its pathway is nucleotide-sugar biosynthesis; ADP-L-glycero-beta-D-manno-heptose biosynthesis; ADP-L-glycero-beta-D-manno-heptose from D-glycero-beta-D-manno-heptose 7-phosphate: step 4/4. Its function is as follows. Catalyzes the interconversion between ADP-D-glycero-beta-D-manno-heptose and ADP-L-glycero-beta-D-manno-heptose via an epimerization at carbon 6 of the heptose. The sequence is that of ADP-L-glycero-D-manno-heptose-6-epimerase from Cupriavidus necator (strain ATCC 17699 / DSM 428 / KCTC 22496 / NCIMB 10442 / H16 / Stanier 337) (Ralstonia eutropha).